Here is a 183-residue protein sequence, read N- to C-terminus: Integrase-like protein y4lS (183 aa).

Positions 2-136 (ARIGYARTFT…EGIAAARKRG (135 aa)) constitute a Resolvase/invertase-type recombinase catalytic domain.

It belongs to the site-specific recombinase resolvase family.

The polypeptide is Integrase-like protein y4lS (Sinorhizobium fredii (strain NBRC 101917 / NGR234)).